Here is a 377-residue protein sequence, read N- to C-terminus: uncharacterized protein (377 aa).

This is an uncharacterized protein from Magallana gigas (Pacific oyster).